A 600-amino-acid chain; its full sequence is Na(+)/dicarboxylate cotransporter 3 (600 aa).

Residues Met1 to Arg16 lie on the Cytoplasmic side of the membrane. A helical transmembrane segment spans residues Leu17–Lys37. Over Glu38–Glu55 the chain is Extracellular. Residues Ala56–Leu76 traverse the membrane as a helical segment. At Pro77 to Cys82 the chain is on the cytoplasmic side. Residues Pro83–Ile103 form a helical membrane-spanning segment. The Extracellular portion of the chain corresponds to Glu104–Phe137. The helical transmembrane segment at Leu138 to Ile158 threads the bilayer. The Cytoplasmic portion of the chain corresponds to Leu159 to Trp229. Residues Lys230 to Gly250 traverse the membrane as a helical segment. The Extracellular segment spans residues Thr251–Ile278. A helical membrane pass occupies residues Phe279–Tyr299. Topologically, residues Gly300 to Ile336 are cytoplasmic. The helical transmembrane segment at Lys337–Arg357 threads the bilayer. Residues Asp358–Gly372 lie on the Extracellular side of the membrane. A helical transmembrane segment spans residues Phe373–Gln393. The Cytoplasmic portion of the chain corresponds to Lys394–Thr422. An intramembrane region (helical) is located at residues Val423–Glu443. Over Ser444 to Pro461 the chain is Cytoplasmic. Residues Pro462 to Asn482 form a helical membrane-spanning segment. Topologically, residues Thr483–Leu505 are extracellular. Residues Tyr506 to Pro526 form a helical membrane-spanning segment. The Cytoplasmic segment spans residues Pro527–Gly546. Residues Leu547 to Thr567 traverse the membrane as a helical segment. Residues Ile568–Phe600 lie on the Extracellular side of the membrane. N-linked (GlcNAc...) asparagine glycosylation is found at Asn584 and Asn594.

Belongs to the SLC13A/DASS transporter (TC 2.A.47) family. NADC subfamily. As to expression, highly expressed in kidney, and at much lower levels in brain.

The protein resides in the cell membrane. It carries out the reaction succinate(out) + 3 Na(+)(out) = succinate(in) + 3 Na(+)(in). The catalysed reaction is 2-oxoglutarate(out) + 3 Na(+)(out) = 2-oxoglutarate(in) + 3 Na(+)(in). The enzyme catalyses N-acetyl-L-aspartate(out) + 3 Na(+)(out) = N-acetyl-L-aspartate(in) + 3 Na(+)(in). It catalyses the reaction fumarate(out) + 3 Na(+)(out) = fumarate(in) + 3 Na(+)(in). It carries out the reaction glutarate(out) + 3 Na(+)(out) = glutarate(in) + 3 Na(+)(in). The catalysed reaction is 2,2-dimethylsuccinate(out) + 3 Na(+)(out) = 2,2-dimethylsuccinate(in) + 3 Na(+)(in). The enzyme catalyses 2,3-dimethylsuccinate(out) + 3 Na(+)(out) = 2,3-dimethylsuccinate(in) + 3 Na(+)(in). It catalyses the reaction malate(out) + 3 Na(+)(out) = malate(in) + 3 Na(+)(in). It carries out the reaction itaconate(out) + 3 Na(+)(out) = itaconate(in) + 3 Na(+)(in). Functionally, high-affinity sodium-dicarboxylate cotransporter that accepts a range of substrates with 4-6 carbon atoms, such as the citric acid cycle intermediates succinate and alpha-ketoglutarate (2-oxoglutarate), as well as other compounds including N-acetyl-L-aspartate. Transports the dicarboxylate into the cell with a probable stoichiometry of 3 Na(+) for 1 divalent dicarboxylate, rendering the process electrogenic. Can transport citrate in a Na(+)-dependent manner, recognizing the divalent form of citrate rather than the trivalent form which is normally found in blood. Imports itaconate in hepatocytes leading to activation of TFEB-dependent lysosomal biogenesis involved in antibacterial innate immune response. This is Na(+)/dicarboxylate cotransporter 3 (Slc13a3) from Mus musculus (Mouse).